A 431-amino-acid polypeptide reads, in one-letter code: Glutamyl-tRNA(Gln) amidotransferase subunit A (431 aa).

Active-site charge relay system residues include lysine 55 and serine 130. The active-site Acyl-ester intermediate is serine 154.

Belongs to the amidase family. GatA subfamily. As to quaternary structure, heterotrimer of A, B and C subunits.

The catalysed reaction is L-glutamyl-tRNA(Gln) + L-glutamine + ATP + H2O = L-glutaminyl-tRNA(Gln) + L-glutamate + ADP + phosphate + H(+). Functionally, allows the formation of correctly charged Gln-tRNA(Gln) through the transamidation of misacylated Glu-tRNA(Gln) in organisms which lack glutaminyl-tRNA synthetase. The reaction takes place in the presence of glutamine and ATP through an activated gamma-phospho-Glu-tRNA(Gln). The protein is Glutamyl-tRNA(Gln) amidotransferase subunit A of Methanococcus maripaludis (strain C5 / ATCC BAA-1333).